A 338-amino-acid polypeptide reads, in one-letter code: Ketol-acid reductoisomerase (NADP(+)) (338 aa).

Positions methionine 1–threonine 181 constitute a KARI N-terminal Rossmann domain. Residues tyrosine 24–glutamine 27, arginine 47, serine 50, serine 52, and aspartate 82–glutamine 85 contribute to the NADP(+) site. Histidine 107 is a catalytic residue. Glycine 133 provides a ligand contact to NADP(+). The 146-residue stretch at threonine 182–isoleucine 327 folds into the KARI C-terminal knotted domain. Residues aspartate 190, glutamate 194, glutamate 226, and glutamate 230 each contribute to the Mg(2+) site. Substrate is bound at residue serine 251.

This sequence belongs to the ketol-acid reductoisomerase family. Requires Mg(2+) as cofactor.

The catalysed reaction is (2R)-2,3-dihydroxy-3-methylbutanoate + NADP(+) = (2S)-2-acetolactate + NADPH + H(+). The enzyme catalyses (2R,3R)-2,3-dihydroxy-3-methylpentanoate + NADP(+) = (S)-2-ethyl-2-hydroxy-3-oxobutanoate + NADPH + H(+). It participates in amino-acid biosynthesis; L-isoleucine biosynthesis; L-isoleucine from 2-oxobutanoate: step 2/4. It functions in the pathway amino-acid biosynthesis; L-valine biosynthesis; L-valine from pyruvate: step 2/4. Its function is as follows. Involved in the biosynthesis of branched-chain amino acids (BCAA). Catalyzes an alkyl-migration followed by a ketol-acid reduction of (S)-2-acetolactate (S2AL) to yield (R)-2,3-dihydroxy-isovalerate. In the isomerase reaction, S2AL is rearranged via a Mg-dependent methyl migration to produce 3-hydroxy-3-methyl-2-ketobutyrate (HMKB). In the reductase reaction, this 2-ketoacid undergoes a metal-dependent reduction by NADPH to yield (R)-2,3-dihydroxy-isovalerate. This is Ketol-acid reductoisomerase (NADP(+)) from Hahella chejuensis (strain KCTC 2396).